The primary structure comprises 158 residues: Transcription elongation factor GreA (158 aa).

The protein belongs to the GreA/GreB family.

Functionally, necessary for efficient RNA polymerase transcription elongation past template-encoded arresting sites. The arresting sites in DNA have the property of trapping a certain fraction of elongating RNA polymerases that pass through, resulting in locked ternary complexes. Cleavage of the nascent transcript by cleavage factors such as GreA or GreB allows the resumption of elongation from the new 3'terminus. GreA releases sequences of 2 to 3 nucleotides. This Ralstonia nicotianae (strain ATCC BAA-1114 / GMI1000) (Ralstonia solanacearum) protein is Transcription elongation factor GreA.